The sequence spans 172 residues: uncharacterized protein (172 aa).

Residues 22–64 (RSVSSSPAAKQPAPGTVAQSFPPGELALRDETGGRGRGTRGIR) are disordered.

This is an uncharacterized protein from Human cytomegalovirus (strain AD169) (HHV-5).